The primary structure comprises 293 residues: D-psicose 3-epimerase (293 aa).

Substrate contacts are provided by Tyr6 and Ala107. The Proton donor/acceptor role is filled by Glu150. Residue Glu150 participates in Mn(2+) binding. Residues Glu156 and 183–186 (DTFH) each bind substrate. 2 residues coordinate Mn(2+): Asp183 and His209. Arg215 is a binding site for substrate. The active-site Proton donor/acceptor is the Glu244. Glu244 provides a ligand contact to Mn(2+).

It belongs to the hyi family. Homotetramer. Mn(2+) is required as a cofactor. Co(2+) serves as cofactor.

It carries out the reaction D-allulose = keto-D-fructose. Functionally, involved in the biosynthesis of D-psicose. Catalyzes the reversible epimerization of D-fructose at the C3 position to yield D-psicose. The enzyme is highly specific for D-psicose and shows very low activity with D-tagatose. This chain is D-psicose 3-epimerase, found in Ruminiclostridium cellulolyticum (strain ATCC 35319 / DSM 5812 / JCM 6584 / H10) (Clostridium cellulolyticum).